The following is a 502-amino-acid chain: Nostrin (502 aa).

The F-BAR domain maps to 1–260 (MRDPLTDCSY…AISKVDVEKD (260 aa)). S114 carries the post-translational modification Phosphoserine. 2 coiled-coil regions span residues 160–230 (SMTQ…LNQY) and 305–335 (KLWRLQKDIEKASRDKEGLEQKLKALASSAS). An REM-1 domain is found at 292–372 (PMDKERRKSL…SYKLSTVLAD (81 aa)). The disordered stretch occupies residues 413–437 (KAESKAPAGEQNNPSSSRPGSSVSQ). A compositionally biased stretch (low complexity) spans 423–437 (QNNPSSSRPGSSVSQ). An SH3 domain is found at 438-497 (GNNQLCKALYTFQARQDDELNLEKGDIVTIHEKKEEGWWFGSLNGKKGHFPAAYVEELPP). S479 is subject to Phosphoserine.

Homotrimer. Interacts with DAB2. Interacts with NOS3, WASL and CAV1. Interacts (via SH3 domain) with DNM2; this interaction allows the recruitment of NOS3 to dynamin-positive structures. In terms of tissue distribution, over-expressed in brain microcapillaries from spontaneously hypertensive rats.

It is found in the cell membrane. The protein resides in the cytoplasmic vesicle. It localises to the cytoplasm. The protein localises to the cytoskeleton. Its subcellular location is the nucleus. Functionally, multivalent adapter protein which may decrease NOS3 activity by inducing its translocation away from the plasma membrane. The chain is Nostrin from Rattus norvegicus (Rat).